The primary structure comprises 741 residues: Zinc finger protein 425 (741 aa).

A KRAB domain is found at 1–69 (DDVALYFSGQ…EQGCLDKTRR (69 aa)). Disordered regions lie at residues 67–86 (TRRTTSPPTDEQLDMKDTGK) and 128–169 (RRDT…TPGR). Residues 132–151 (FQSPSLQETEIPNKKVSITA) show a composition bias toward polar residues. Residues 153–168 (DPDKKDLRHKPRETPG) are compositionally biased toward basic and acidic residues. 19 C2H2-type zinc fingers span residues 179 to 201 (YSCYVCRKVFQVRRDLLKHKRSH), 235 to 257 (FQCSECEKSYFLKGSLVTHQVVH), 263 to 285 (YPCPECDKTFRYRANLKKHLCLH), 291 to 313 (FCCGECGRAFVQQCELTEHLRLH), 319 to 341 (FQCPQCDRCFRLKRGMKVHLSQH), 347 to 369 (FHCPECGRSFSRKAALKTHQRTH), 375 to 397 (FSCDECGRKFIYKIKLDEHIRVH), 403 to 425 (FSCPECNKSFRLKRSLKAHGLQH), 431 to 453 (FQCPECSRGFFWRNAMRAHQRLH), 459 to 481 (FPCAECGKRFTRPSKLACHTRVH), 487 to 509 (FPCGECKKTFSQQSRLTQHLKVH), 515 to 537 (FSCAECGRSFRRRAHLTEHTRLH), 543 to 565 (FQCPECDKSFSWKASMKFHQRMH), 571 to 593 (FACSECGKTYTHQSQLTEHLRLH), 599 to 621 (YQCPECQKTFRLKGNLKSHLLQH), 627 to 649 (FSCVMCGKSFTQQYRLTEHIRVH), 655 to 677 (FQCPECDKSYCIRGSLKVHLYTH), 683 to 705 (FQCPECGKGFLQKRSLKAHLCLH), and 711 to 733 (FSCDECGRSFTYVGALKTHIAVH).

The protein belongs to the krueppel C2H2-type zinc-finger protein family.

Its subcellular location is the nucleus. It localises to the cytoplasm. Acts as a transcriptional repressor. This chain is Zinc finger protein 425 (ZNF425), found in Macaca fascicularis (Crab-eating macaque).